The chain runs to 1294 residues: Leucine-rich repeat receptor protein kinase MSP1 (1294 aa).

The N-terminal stretch at 1–22 (MVSNSFWLFILLVSFIPISAWA) is a signal peptide. LRR repeat units follow at residues 88 to 112 (FQSL…LGNL), 113 to 136 (QNLQ…LYNL), 138 to 160 (MLKE…IAQL), 161 to 184 (QHLT…LGSL), and 186 to 207 (NLEL…TFGN). 3 N-linked (GlcNAc...) asparagine glycosylation sites follow: Asn198, Asn207, and Asn220. 23 LRR repeats span residues 232–256 (LTNL…IGQL), 258–280 (NLEL…IGSL), 282–304 (QLKL…ISGL), 305–328 (SSLT…MGEL), 330–352 (NLTQ…LGNC), 353–376 (KKLT…FADL), 378–400 (AIVS…IQKW), 401–422 (KNAR…VLPL), 423–446 (QHLL…ICQA), 447–469 (NSLH…AFKG), 471–493 (TNLT…YLAE), 494–517 (LPLV…LWES), 519–541 (TLLE…IGKL), 542–565 (SVLQ…VGDL), 566–589 (RNLT…LFNC), 591–613 (KLAT…ISHL), 614–637 (TLLD…ICVG), 649–673 (LQHH…IKNC), 675–697 (MVMV…LGEL), 698–721 (TNLT…SGPL), 722–745 (VQLQ…IGQI), 746–770 (LPKI…LLCN), and 772–794 (YLNH…CPDG). Residues Asn330 and Asn359 are each glycosylated (N-linked (GlcNAc...) asparagine). 2 N-linked (GlcNAc...) asparagine glycosylation sites follow: Asn458 and Asn472. Residues Asn567, Asn570, and Asn601 are each glycosylated (N-linked (GlcNAc...) asparagine). 3 N-linked (GlcNAc...) asparagine glycosylation sites follow: Asn687, Asn699, and Asn704. N-linked (GlcNAc...) asparagine glycosylation is found at Asn805, Asn821, and Asn832. LRR repeat units follow at residues 822–846 (FTQL…LSDL) and 848–870 (SLNY…ICNI). Residues 917–937 (ITICAFTFVIIIVLVLLAVYL) form a helical membrane-spanning segment. The 281-residue stretch at 1002 to 1282 (FSKVHIIGDG…KGLKMTHGME (281 aa)) folds into the Protein kinase domain. ATP contacts are provided by residues 1008–1016 (IGDGGFGTV) and Lys1030. Residue Asp1129 is the Proton acceptor of the active site.

Belongs to the protein kinase superfamily. Ser/Thr protein kinase family. In terms of assembly, interacts with TDL1A. Expressed in anthers and ovules during meiosis.

It localises to the cell membrane. It carries out the reaction L-seryl-[protein] + ATP = O-phospho-L-seryl-[protein] + ADP + H(+). The catalysed reaction is L-threonyl-[protein] + ATP = O-phospho-L-threonyl-[protein] + ADP + H(+). Functionally, receptor-like kinase that plays important roles in restricting the number of cells entering into male and female sporogenesis. Involved in cell specification during anther development and initiation of anther wall formation. The polypeptide is Leucine-rich repeat receptor protein kinase MSP1 (Oryza sativa subsp. japonica (Rice)).